A 272-amino-acid chain; its full sequence is 2-dehydro-3-deoxyphosphooctonate aldolase (272 aa).

This sequence belongs to the KdsA family.

Its subcellular location is the cytoplasm. It carries out the reaction D-arabinose 5-phosphate + phosphoenolpyruvate + H2O = 3-deoxy-alpha-D-manno-2-octulosonate-8-phosphate + phosphate. The protein operates within carbohydrate biosynthesis; 3-deoxy-D-manno-octulosonate biosynthesis; 3-deoxy-D-manno-octulosonate from D-ribulose 5-phosphate: step 2/3. It participates in bacterial outer membrane biogenesis; lipopolysaccharide biosynthesis. This Pelobacter propionicus (strain DSM 2379 / NBRC 103807 / OttBd1) protein is 2-dehydro-3-deoxyphosphooctonate aldolase.